A 719-amino-acid chain; its full sequence is Translation factor guf1, mitochondrial (719 aa).

A mitochondrion-targeting transit peptide spans 1–75; that stretch reads MRGALCRPDV…TRCFSALRSL (75 aa). Positions 119-301 constitute a tr-type G domain; the sequence is ERYRNFCIVA…AVISNVPAPV (183 aa). GTP contacts are provided by residues 128-135, 194-198, and 248-251; these read AHIDHGKS, DTPGH, and NKID.

Belongs to the TRAFAC class translation factor GTPase superfamily. Classic translation factor GTPase family. LepA subfamily.

It is found in the mitochondrion inner membrane. It catalyses the reaction GTP + H2O = GDP + phosphate + H(+). In terms of biological role, promotes mitochondrial protein synthesis. May act as a fidelity factor of the translation reaction, by catalyzing a one-codon backward translocation of tRNAs on improperly translocated ribosomes. Binds to mitochondrial ribosomes in a GTP-dependent manner. In Neurospora crassa (strain ATCC 24698 / 74-OR23-1A / CBS 708.71 / DSM 1257 / FGSC 987), this protein is Translation factor guf1, mitochondrial (guf1).